The sequence spans 368 residues: Guanylate binding protein 128up (368 aa).

Lysine 22 is modified ((3S)-3-hydroxylysine). Positions alanine 65 to arginine 290 constitute an OBG-type G domain. GTP is bound by residues glycine 71 to serine 78, aspartate 117 to isoleucine 121, and asparagine 248 to aspartate 251. The 77-residue stretch at arginine 290–lysine 366 folds into the TGS domain.

Belongs to the TRAFAC class OBG-HflX-like GTPase superfamily. OBG GTPase family. Hydroxylated (with S stereochemistry) at C-3 of Lys-22 by JMJD7. In terms of tissue distribution, expressed in posterior-lateral epidermis of the maxillary lobe.

Its function is as follows. Catalyzes the conversion of GTP to GDP through hydrolysis of the gamma-phosphate bond in GTP. Dfd/deformed is required to activate 128up in maxillary segment cells. This is Guanylate binding protein 128up from Drosophila melanogaster (Fruit fly).